The chain runs to 212 residues: Thymidylate kinase (212 aa).

10 to 17 lines the ATP pocket; it reads GLEGAGKT.

It belongs to the thymidylate kinase family.

The enzyme catalyses dTMP + ATP = dTDP + ADP. In terms of biological role, phosphorylation of dTMP to form dTDP in both de novo and salvage pathways of dTTP synthesis. The polypeptide is Thymidylate kinase (Photorhabdus laumondii subsp. laumondii (strain DSM 15139 / CIP 105565 / TT01) (Photorhabdus luminescens subsp. laumondii)).